A 286-amino-acid chain; its full sequence is Bifunctional protein FolD (286 aa).

Residues 165 to 167 (GRS), S190, and I231 contribute to the NADP(+) site.

This sequence belongs to the tetrahydrofolate dehydrogenase/cyclohydrolase family. Homodimer.

The catalysed reaction is (6R)-5,10-methylene-5,6,7,8-tetrahydrofolate + NADP(+) = (6R)-5,10-methenyltetrahydrofolate + NADPH. It carries out the reaction (6R)-5,10-methenyltetrahydrofolate + H2O = (6R)-10-formyltetrahydrofolate + H(+). It functions in the pathway one-carbon metabolism; tetrahydrofolate interconversion. Functionally, catalyzes the oxidation of 5,10-methylenetetrahydrofolate to 5,10-methenyltetrahydrofolate and then the hydrolysis of 5,10-methenyltetrahydrofolate to 10-formyltetrahydrofolate. The sequence is that of Bifunctional protein FolD from Thermodesulfovibrio yellowstonii (strain ATCC 51303 / DSM 11347 / YP87).